Here is a 343-residue protein sequence, read N- to C-terminus: Glycerol-3-phosphate dehydrogenase [NAD(P)+] (343 aa).

NADPH is bound by residues Ser-22, Tyr-23, His-43, and Lys-117. Lys-117, Gly-146, and Thr-148 together coordinate sn-glycerol 3-phosphate. Ala-150 is a binding site for NADPH. 5 residues coordinate sn-glycerol 3-phosphate: Lys-202, Asp-255, Ser-265, Arg-266, and Asn-267. The Proton acceptor role is filled by Lys-202. Residue Arg-266 coordinates NADPH. NADPH contacts are provided by Val-290 and Glu-292.

Belongs to the NAD-dependent glycerol-3-phosphate dehydrogenase family.

It is found in the cytoplasm. The enzyme catalyses sn-glycerol 3-phosphate + NAD(+) = dihydroxyacetone phosphate + NADH + H(+). It carries out the reaction sn-glycerol 3-phosphate + NADP(+) = dihydroxyacetone phosphate + NADPH + H(+). The protein operates within membrane lipid metabolism; glycerophospholipid metabolism. Catalyzes the reduction of the glycolytic intermediate dihydroxyacetone phosphate (DHAP) to sn-glycerol 3-phosphate (G3P), the key precursor for phospholipid synthesis. The polypeptide is Glycerol-3-phosphate dehydrogenase [NAD(P)+] (Aliivibrio fischeri (strain ATCC 700601 / ES114) (Vibrio fischeri)).